The following is a 676-amino-acid chain: Beta-galactosidase BgaP (676 aa).

Arg-112 contacts substrate. Residue Cys-116 coordinates Zn(2+). Asn-150 contributes to the substrate binding site. The active-site Proton donor is Glu-151. Zn(2+) is bound by residues Cys-156, Cys-158, and Cys-161. Residue Glu-308 is the Nucleophile of the active site. Residues Trp-316 and 356–359 contribute to the substrate site; that span reads EKYH.

This sequence belongs to the glycosyl hydrolase 42 family. Homodimer.

The catalysed reaction is Hydrolysis of terminal non-reducing beta-D-galactose residues in beta-D-galactosides.. With respect to regulation, no activity lost during treatment with 100 mM EDTA after 2 hours, and the addition of 1 mM MgCl(2), 1 mM CaCl(2) or 1 mM MnCl(2) has no effect. However, the enzyme activity is inhibited by Zn(2+), Cu(2+), Ni(2+) and Co(2+) to different extents. Addition of Na(+) or K(+) slightly stimulates the enzyme activity at low concentrations and the optimal concentration is 250 mM. A further increase of their concentration of ions above the optimum value results in a decrease in enzyme activity. The enzyme is still active even in the presence of Na(+) or K(+) at a concentration up to 5 M. In terms of biological role, hydrolyzes lactose, o-nitrophenyl-beta-D-galactopyranoside (ONPG), p-nitrophenyl-beta-D-galactopyranoside (PNPG), 5-bromo-4-chloro-3-indolyl-beta-D-galactopyranoside (X-gal), o-nitrophenyl-beta-D-fucopyranoside, p-nitrophenyl-beta-D-mannoside, o-nitrophenyl-beta-D-glucoside, p-nitrophenyl-beta-D-xyloside, p-nitrophenyl-beta-D-cellobioside, p-nitrophenyl-beta-D-arabinoside, p-nitrophenyl-beta-D-lactoside, p-nitrophenyl-beta-D-galacturonide, p-nitrophenyl-beta-D-glucuronide and p-nitrophenyl-alpha-D-galactoside with highest level of activity with ONPG as substrate, intermediate level of activity with PNPG and lower levels of activity with all other chromogenic nitrophenyl analogs. Able to hydrolyze 34% of milk lactose after 60 minutes at 5 degrees Celsius. This chain is Beta-galactosidase BgaP, found in Planococcus sp. (strain L4).